The sequence spans 167 residues: uncharacterized protein (167 aa).

The N-terminal stretch at 1-23 (MKRLHKRFLLATFCALFTATLQA) is a signal peptide. A disulfide bond links C39 and C77.

The protein belongs to the fimbrial protein family.

The protein resides in the fimbrium. This is an uncharacterized protein from Escherichia coli (strain K12).